The chain runs to 767 residues: MLVTHIFLLTLSLSVPTLGQYEHWLYYPEYQASQAPEPLPTPARNVPQIHVRLAGEKRKHNEGRVEVYYEGEWGTVCDDDFSMYAAHIVCRELGYQDAVSWSPSSKYGKGEGRIWLDNVNCNGREKSIASCGSNGWGVTDCKHSEDVGVQCSDRRIPGFKVSNELPGQLEGLNIQVEEVRIRAILSAYRKRVPVTEGFVEVKVQGSWRQVCNAEWSSKNSRVVCGMFGFPAEKKFNNKVYKLFSSRRKHTYWQFSANCTGNEAHLSSCKVGGVLTPDPKTNQTCSDGSPAVVSCTPGRAFAPSPGTGFGKAFRQEQPLVRLRGGANTGEGRVEVLKNGEWGTICDDKWNLVTASVVCRELGFGSAKEALAGAQMGQGMGHIHMSEIQCNGFEKSLIDCKFNVHSQGCNHEEDAAVRCNVPAMGFENQVRLSGGRHPTEGRVEVLMERNGTLRWGTVCSDTWGTMEAMIVCRQLGLGFASHAFQETWYWQGDINADDVVMSGVKCSGTEMSLAHCRHDGANINCPRGGGRFAAGVSCVETAPDLVLNAALVEQTTYLEDRPMFMLQCAHEEQCLSSSADRTSPTTGYRRLLRFSSQIHNNGQADFRPKTGRHSWIWHDCHRHYHSMEVFTHYDLLSLNGTKVAEGHKASFCLEDSECETDVQKQYACANFGEQGITVGCWDVYRHDIDCQWVDITDVAPGDYFFQVIINPNQEVAESDYTNNIMKCRCRYDGHRIWMYNCHIGGSYSTETEEKFEHFSGLMNNQLSTR.

Residues 1–19 (MLVTHIFLLTLSLSVPTLG) form the signal peptide. 4 consecutive SRCR domains span residues 51–152 (VRLA…VQCS), 181–295 (IRAI…VSCT), 319–418 (VRLR…VRCN), and 428–537 (VRLS…VSCV). Intrachain disulfides connect cysteine 77–cysteine 141, cysteine 90–cysteine 151, cysteine 121–cysteine 131, cysteine 211–cysteine 284, cysteine 224–cysteine 294, cysteine 258–cysteine 268, cysteine 344–cysteine 407, cysteine 357–cysteine 417, and cysteine 388–cysteine 398. Asparagine 281 is a glycosylation site (N-linked (GlcNAc...) asparagine). The N-linked (GlcNAc...) asparagine glycan is linked to asparagine 448. 3 disulfides stabilise this stretch: cysteine 457–cysteine 523, cysteine 470–cysteine 536, and cysteine 504–cysteine 514. Residues 541–744 (PDLVLNAALV…WMYNCHIGGS (204 aa)) are lysyl-oxidase like. Ca(2+) is bound by residues aspartate 542 and leucine 543. Cystine bridges form between cysteine 566-cysteine 618, cysteine 572-cysteine 688, cysteine 650-cysteine 666, and cysteine 656-cysteine 678. The Cu cation site is built by histidine 619, histidine 621, and histidine 623. N-linked (GlcNAc...) asparagine glycosylation is present at asparagine 637. Positions 646–682 (KASFCLEDSECETDVQKQYACANFGEQGITVGCWDVY) form a cross-link, lysine tyrosylquinone (Lys-Tyr). A 2',4',5'-topaquinone modification is found at tyrosine 682. The Ca(2+) site is built by glutamate 715, aspartate 717, asparagine 720, and asparagine 721. Cysteine 725 and cysteine 739 are joined by a disulfide.

The protein belongs to the lysyl oxidase family. Requires Cu cation as cofactor. The cofactor is lysine tyrosylquinone residue. In terms of processing, the lysine tyrosylquinone cross-link (LTQ) is generated by condensation of the epsilon-amino group of a lysine with a topaquinone produced by oxidation of tyrosine.

The protein resides in the secreted. It localises to the extracellular space. The protein localises to the extracellular matrix. Its subcellular location is the basement membrane. It is found in the nucleus. The protein resides in the chromosome. It localises to the endoplasmic reticulum. It carries out the reaction L-lysyl-[protein] + O2 + H2O = (S)-2-amino-6-oxohexanoyl-[protein] + H2O2 + NH4(+). Its function is as follows. Mediates the post-translational oxidative deamination of lysine residues on target proteins leading to the formation of deaminated lysine (allysine). Acts as a transcription corepressor and specifically mediates deamination of trimethylated 'Lys-4' of histone H3 (H3K4me3), a specific tag for epigenetic transcriptional activation. Shows no activity against histone H3 when it is trimethylated on 'Lys-9' (H3K9me3) or 'Lys-27' (H3K27me3) or when 'Lys-4' is monomethylated (H3K4me1) or dimethylated (H3K4me2). Also mediates deamination of methylated TAF10, a member of the transcription factor IID (TFIID) complex, which induces release of TAF10 from promoters, leading to inhibition of TFIID-dependent transcription. LOXL2-mediated deamination of TAF10 results in transcriptional repression of genes required for embryonic stem cell pluripotency. Involved in epithelial to mesenchymal transition (EMT) and participates in repression of E-cadherin, probably by mediating deamination of histone H3. When secreted into the extracellular matrix, promotes cross-linking of extracellular matrix proteins by mediating oxidative deamination of peptidyl lysine residues in precursors to fibrous collagen and elastin. Acts as a regulator of sprouting angiogenesis, probably via collagen IV scaffolding. Acts as a regulator of chondrocyte differentiation, probably by regulating expression of factors that control chondrocyte differentiation. The protein is Lysyl oxidase homolog 2 (loxl2) of Xenopus tropicalis (Western clawed frog).